Here is a 2303-residue protein sequence, read N- to C-terminus: Adenomatous polyposis coli protein 2 (2303 aa).

The stretch at 8-59 (YEQLVRQVEALKAENSHLRQELRDNSSHLSKLETETSGMKEVLKHLQGKLEQ) forms a coiled coil. Disordered stretches follow at residues 94–120 (PTLG…KDSF) and 247–270 (VPVD…QPGN). 6 ARM repeats span residues 302 to 341 (PESC…PGAK), 479 to 518 (ANKA…NLSW), 522 to 562 (INSK…NLSA), 566 to 609 (ENKA…NVSS), 615 to 654 (EDYR…NLSA), and 657 to 696 (ARDQ…NLLA). 2 disordered regions span residues 744 to 764 (KQGP…LRHL) and 816 to 835 (LART…DTSG). The span at 825–834 (GGKEAEKDTS) shows a compositional bias: basic and acidic residues. Residues 840–864 (AAKAKAKLALAVARIDQLVEDISAL) adopt a coiled-coil conformation. 4 disordered regions span residues 867–908 (SSDD…AGSR), 953–986 (RRED…ATSA), 1069–1152 (RCSS…ENYV), and 1173–1228 (SPSI…EATQ). Over residues 869 to 878 (DDSFSLSSGD) the composition is skewed to low complexity. The stretch at 1058-1077 (LAAQEGPLSLSRCSSLSSLS) is repeat 1. The 5 X 20 AA approximate repeat of F-X-V-E-X-T-P-X-C-F-S-R-X-S-S-L-S-S-L-S stretch occupies residues 1058 to 1587 (LAAQEGPLSL…SLSSSASSLS (530 aa)). Positions 1058–1587 (LAAQEGPLSL…SLSSSASSLS (530 aa)) are interaction with CTNNB1. The segment covering 1069 to 1084 (RCSSLSSLSSAGRPGP) has biased composition (low complexity). The segment covering 1088 to 1101 (GDLDDSDSSLEGLE) has biased composition (acidic residues). Positions 1143–1152 (TPSSSSENYV) are enriched in polar residues. Repeat unit 2 spans residues 1150-1169 (NYVQETPLVLSRCSSVSSLG). The segment covering 1173–1186 (SPSIASSIPSEPCS) has biased composition (low complexity). Positions 1202–1212 (PGQTMPPSRSK) are enriched in polar residues. Repeat unit 3 spans residues 1263-1282 (FTVEKPDENFSCASSLSALA). 5 disordered regions span residues 1307 to 1335 (GAGG…PRGA), 1382 to 1497 (PAQE…QSLC), 1510 to 1684 (YGND…LDSV), 1724 to 2031 (LSVG…RGRP), and 2046 to 2232 (LRAA…DVDG). The span at 1390-1410 (TDSAEGTPVNFSSAASLSDET) shows a compositional bias: polar residues. Residues 1391–1410 (DSAEGTPVNFSSAASLSDET) form repeat 4. Basic and acidic residues-rich tracts occupy residues 1477 to 1489 (ADKD…RTRG) and 1537 to 1548 (FTRERPQGRKEA). Repeat unit 5 spans residues 1568–1587 (LIADETPPCYSLSSSASSLS). Residues 1578–1589 (SLSSSASSLSEP) show a composition bias toward low complexity. A phosphoserine mark is found at S1585 and S1587. Positions 1638–1654 (PRRRPPVSGLRRRKPRA) are enriched in basic residues. 2 stretches are compositionally biased toward basic and acidic residues: residues 1655–1671 (TRLD…RGEE) and 1739–1755 (RQAE…EKRG). A compositionally biased stretch (low complexity) spans 1819–1830 (APPCLAQPAAPA). The interval 1821-1900 (PCLAQPAAPA…PPVTQAAGAL (80 aa)) is required for localization to microtubules and function in microtubule stabilization. Over residues 1851–1860 (ELATLSQPPR) the composition is skewed to polar residues. 5 stretches are compositionally biased toward low complexity: residues 1868-1886 (LAKT…SQPL), 1971-1984 (GLVR…SGSE), 2011-2026 (LSSA…GASP), 2049-2062 (APRQ…QRPP), and 2113-2123 (GAVPAAPASAD). Residues 2067–2144 (SPGERPARRT…PLPRVAAPGT (78 aa)) form an interaction with MAPRE1 and MAPRE3 region. Residues 2124–2135 (AARRSSDGEPRP) are compositionally biased toward basic and acidic residues. The span at 2200-2209 (KTNSSTSPSL) shows a compositional bias: polar residues.

This sequence belongs to the adenomatous polyposis coli (APC) family. Interacts with PSRC1. Interacts with APC. Interacts with CTNNB1. Interacts with MAPRE1 and MAPRE3. Interacts with TP53BP. Interacts possibly with AXIN2. As to expression, widely expressed (at protein level). Specifically expressed in the CNS.

Its subcellular location is the cytoplasm. It is found in the cytoskeleton. The protein resides in the golgi apparatus. The protein localises to the perinuclear region. In terms of biological role, stabilizes microtubules and may regulate actin fiber dynamics through the activation of Rho family GTPases. May also function in Wnt signaling by promoting the rapid degradation of CTNNB1. The polypeptide is Adenomatous polyposis coli protein 2 (Homo sapiens (Human)).